Reading from the N-terminus, the 198-residue chain is Phosphoheptose isomerase (198 aa).

An SIS domain is found at 40–198 (IIGALRGGHK…IEAALMQDAR (159 aa)). Position 55-57 (55-57 (NGG)) interacts with substrate. 2 residues coordinate Zn(2+): His64 and Glu68. Residues Glu68, 97 to 98 (ND), 123 to 125 (STS), Ser128, and Gln175 each bind substrate. The Zn(2+) site is built by Gln175 and His183.

It belongs to the SIS family. GmhA subfamily. Homotetramer. Requires Zn(2+) as cofactor.

It is found in the cytoplasm. The catalysed reaction is 2 D-sedoheptulose 7-phosphate = D-glycero-alpha-D-manno-heptose 7-phosphate + D-glycero-beta-D-manno-heptose 7-phosphate. Its pathway is carbohydrate biosynthesis; D-glycero-D-manno-heptose 7-phosphate biosynthesis; D-glycero-alpha-D-manno-heptose 7-phosphate and D-glycero-beta-D-manno-heptose 7-phosphate from sedoheptulose 7-phosphate: step 1/1. Functionally, catalyzes the isomerization of sedoheptulose 7-phosphate in D-glycero-D-manno-heptose 7-phosphate. The protein is Phosphoheptose isomerase of Bradyrhizobium sp. (strain ORS 278).